A 395-amino-acid polypeptide reads, in one-letter code: RNA ligase 1 (395 aa).

ATP contacts are provided by Tyr-48, Arg-65, and Lys-83. The active-site N6-AMP-lysine intermediate is the Lys-113. ATP contacts are provided by Glu-173, Lys-255, and Lys-257. Residue Asp-285 participates in Mg(2+) binding.

The cofactor is Mg(2+). It depends on Mn(2+) as a cofactor.

It carries out the reaction ATP + (ribonucleotide)n-3'-hydroxyl + 5'-phospho-(ribonucleotide)m = (ribonucleotide)n+m + AMP + diphosphate.. Its function is as follows. RNA ligase that ligates single-stranded nucleic acids in an ATP-dependent manner. Catalyzes both inter- and intra-molecular single-stranded DNA (ssDNA) ligation to &gt;50% completion in a matter of hours at an elevated temperature, although favoring intra-molecular ligation on RNA and single-stranded DNA substrates. Is able to catalyze the adenylation reaction of ssDNA 3'-terminal phosphate (ssDNA 3'p) to 3'-adenylated DNA (ssDNA 3'pp5'A). Does not have significant 3'-adenylation activity with a 3'-phosphorylated nicked dsDNA substrate. This Thermus scotoductus protein is RNA ligase 1.